The chain runs to 197 residues: NADH-quinone oxidoreductase subunit C (197 aa).

It belongs to the complex I 30 kDa subunit family. NDH-1 is composed of 14 different subunits. Subunits NuoB, C, D, E, F, and G constitute the peripheral sector of the complex.

It is found in the cell inner membrane. It catalyses the reaction a quinone + NADH + 5 H(+)(in) = a quinol + NAD(+) + 4 H(+)(out). NDH-1 shuttles electrons from NADH, via FMN and iron-sulfur (Fe-S) centers, to quinones in the respiratory chain. The immediate electron acceptor for the enzyme in this species is believed to be ubiquinone. Couples the redox reaction to proton translocation (for every two electrons transferred, four hydrogen ions are translocated across the cytoplasmic membrane), and thus conserves the redox energy in a proton gradient. This is NADH-quinone oxidoreductase subunit C from Rickettsia prowazekii (strain Madrid E).